We begin with the raw amino-acid sequence, 356 residues long: 1-acyl-sn-glycerol-3-phosphate acyltransferase LPAT1, chloroplastic (356 aa).

A chloroplast-targeting transit peptide spans 1–56 (MDVASARSISSHPSYYGKPICSSQSSLIRISRDKVCCFGRISNGMTSFTTSLHAVP). A helical membrane pass occupies residues 127 to 147 (GIFFCVVAGISATFLIVLMII). The short motif at 202 to 207 (HQSFLD) is the HXXXXD motif element. A helical transmembrane segment spans residues 224–244 (TGIFVIPIIGWAMSMMGVVPL).

This sequence belongs to the 1-acyl-sn-glycerol-3-phosphate acyltransferase family. In terms of tissue distribution, widely expressed. Expressed at higher level in leaves. Expressed at lower level in silique walls compared to leaves.

Its subcellular location is the plastid. The protein resides in the chloroplast membrane. The enzyme catalyses a fatty acyl-[ACP] + a 1-acyl-sn-glycero-3-phosphate = a 1,2-diacyl-sn-glycero-3-phosphate + holo-[ACP]. The catalysed reaction is a 1-acyl-sn-glycero-3-phosphate + an acyl-CoA = a 1,2-diacyl-sn-glycero-3-phosphate + CoA. The protein operates within phospholipid metabolism; CDP-diacylglycerol biosynthesis; CDP-diacylglycerol from sn-glycerol 3-phosphate: step 2/3. Functionally, plastidial enzyme of the prokaryotic glycerol-3-phosphate pathway that converts lysophosphatidic acid (LPA) into phosphatidic acid by incorporating an acyl moiety at position sn-2. Utilizes palmitoyl-ACP (16:0-ACP) to produce phosphatidic acid containing a saturated group at position sn-2, which is characteristic of lipids synthesized by the prokaryotic pathway. In vitro, can use 16:0-CoA as acyl donor. Essential for embryo development during the transition from the globular to the heart stage when chloroplasts begin to form. The polypeptide is 1-acyl-sn-glycerol-3-phosphate acyltransferase LPAT1, chloroplastic (Arabidopsis thaliana (Mouse-ear cress)).